Here is a 283-residue protein sequence, read N- to C-terminus: ATP phosphoribosyltransferase (283 aa).

This sequence belongs to the ATP phosphoribosyltransferase family. Long subfamily. It depends on Mg(2+) as a cofactor.

The protein resides in the cytoplasm. The enzyme catalyses 1-(5-phospho-beta-D-ribosyl)-ATP + diphosphate = 5-phospho-alpha-D-ribose 1-diphosphate + ATP. The protein operates within amino-acid biosynthesis; L-histidine biosynthesis; L-histidine from 5-phospho-alpha-D-ribose 1-diphosphate: step 1/9. With respect to regulation, feedback inhibited by histidine. In terms of biological role, catalyzes the condensation of ATP and 5-phosphoribose 1-diphosphate to form N'-(5'-phosphoribosyl)-ATP (PR-ATP). Has a crucial role in the pathway because the rate of histidine biosynthesis seems to be controlled primarily by regulation of HisG enzymatic activity. The sequence is that of ATP phosphoribosyltransferase from Bacteroides fragilis (strain ATCC 25285 / DSM 2151 / CCUG 4856 / JCM 11019 / LMG 10263 / NCTC 9343 / Onslow / VPI 2553 / EN-2).